Consider the following 146-residue polypeptide: Urease accessory protein UreE 1 (146 aa).

This sequence belongs to the UreE family.

The protein resides in the cytoplasm. Functionally, involved in urease metallocenter assembly. Binds nickel. Probably functions as a nickel donor during metallocenter assembly. This is Urease accessory protein UreE 1 from Pseudomonas syringae pv. tomato (strain ATCC BAA-871 / DC3000).